The chain runs to 161 residues: Endoribonuclease YbeY (161 aa).

Positions 121, 125, and 131 each coordinate Zn(2+).

Belongs to the endoribonuclease YbeY family. Zn(2+) is required as a cofactor.

The protein localises to the cytoplasm. In terms of biological role, single strand-specific metallo-endoribonuclease involved in late-stage 70S ribosome quality control and in maturation of the 3' terminus of the 16S rRNA. The chain is Endoribonuclease YbeY from Xanthomonas oryzae pv. oryzae (strain MAFF 311018).